Reading from the N-terminus, the 491-residue chain is Allene oxide synthase 3 (491 aa).

Residues Lys-104, His-135, and Lys-139 each coordinate heme b. 2 residues coordinate (13S)-hydroperoxy-(9Z,11E)-octadecadienoate: Asn-296 and Lys-302. Position 296 (Asn-296) interacts with (13S)-hydroperoxy-(9Z,11E,15Z)-octadecatrienoate. Residues Lys-442 and Cys-444 each contribute to the heme b site.

This sequence belongs to the cytochrome P450 family. The cofactor is heme b. In terms of tissue distribution, expressed in roots. Not detected in aerial tissues, including cotyledons, leaves, stems and flower buds.

It carries out the reaction (13S)-hydroperoxy-(9Z,11E,15Z)-octadecatrienoate = (9Z,13S,15Z)-12,13-epoxyoctadeca-9,11,15-trienoate + H2O. The enzyme catalyses (13S)-hydroperoxy-(9Z,11E)-octadecadienoate = (9Z,13S)-12,13-epoxyoctadeca-9,11-dienoate + H2O. It catalyses the reaction (9Z,13S,15Z)-12,13-epoxyoctadeca-9,11,15-trienoate = (9S,13S,15Z)-12-oxophyto-10,15-dienoate. Cytochrome P450 metabolizing both 13- and 9-hydroperoxides of linoleic and linolenic acids, but with a marked preference for 9-hydroperoxy fatty acids. Catalyzes not only the synthesis of allene oxide, but also its hydrolysis and cyclization. The first step is the synthesis of (12Z)-9,10-epoxyoctadeca-10,12-dienoic acid (9,10-EOD) and the final products are (9R)-alpha-ketol and the racemic cis-10-oxo-11-phytoenoic acid. The cyclase activity possesses regiospecificity and (9Z)-12,13-epoxyoctadeca-9,11-dienoic acid (12,13-EOD) is significantly less efficient as a substrate for cyclopentenone production than 9,10-EOD. Has no hydroperoxide lyase activity. May play a defensive role against soil-borne pests that affect roots or juvenile tissues as they emerge from the germinating seed. This chain is Allene oxide synthase 3, found in Solanum lycopersicum (Tomato).